The primary structure comprises 256 residues: 1-(5-phosphoribosyl)-5-[(5-phosphoribosylamino)methylideneamino] imidazole-4-carboxamide isomerase (256 aa).

Asp8 acts as the Proton acceptor in catalysis. The active-site Proton donor is the Asp129.

It belongs to the HisA/HisF family.

Its subcellular location is the cytoplasm. The catalysed reaction is 1-(5-phospho-beta-D-ribosyl)-5-[(5-phospho-beta-D-ribosylamino)methylideneamino]imidazole-4-carboxamide = 5-[(5-phospho-1-deoxy-D-ribulos-1-ylimino)methylamino]-1-(5-phospho-beta-D-ribosyl)imidazole-4-carboxamide. It functions in the pathway amino-acid biosynthesis; L-histidine biosynthesis; L-histidine from 5-phospho-alpha-D-ribose 1-diphosphate: step 4/9. The sequence is that of 1-(5-phosphoribosyl)-5-[(5-phosphoribosylamino)methylideneamino] imidazole-4-carboxamide isomerase from Picosynechococcus sp. (strain ATCC 27264 / PCC 7002 / PR-6) (Agmenellum quadruplicatum).